We begin with the raw amino-acid sequence, 140 residues long: Large ribosomal subunit protein uL11 (140 aa).

Belongs to the universal ribosomal protein uL11 family. In terms of assembly, part of the ribosomal stalk of the 50S ribosomal subunit. Interacts with L10 and the large rRNA to form the base of the stalk. L10 forms an elongated spine to which L12 dimers bind in a sequential fashion forming a multimeric L10(L12)X complex. One or more lysine residues are methylated.

Forms part of the ribosomal stalk which helps the ribosome interact with GTP-bound translation factors. The sequence is that of Large ribosomal subunit protein uL11 from Symbiobacterium thermophilum (strain DSM 24528 / JCM 14929 / IAM 14863 / T).